Consider the following 581-residue polypeptide: DEAD-box ATP-dependent RNA helicase 22 (581 aa).

The short motif at 80 to 108 is the Q motif element; the sequence is VSWKSLGLSDNVSIALRDSGFDRPSLTQA. Residues 111-380 form the Helicase ATP-binding domain; it reads IPSILSGKDV…GGILKHMFQD (270 aa). ATP is bound at residue 124–131; it reads AETGSGKT. Positions 244–247 match the DEAD box motif; sequence DEAD. One can recognise a Helicase C-terminal domain in the interval 408–566; sequence QVDALIEAVK…GFRNKVKKRA (159 aa).

The protein belongs to the DEAD box helicase family.

It carries out the reaction ATP + H2O = ADP + phosphate + H(+). This chain is DEAD-box ATP-dependent RNA helicase 22 (RH22), found in Arabidopsis thaliana (Mouse-ear cress).